We begin with the raw amino-acid sequence, 335 residues long: Phenylalanine--tRNA ligase alpha subunit (335 aa).

Glu262 contributes to the Mg(2+) binding site.

It belongs to the class-II aminoacyl-tRNA synthetase family. Phe-tRNA synthetase alpha subunit type 1 subfamily. In terms of assembly, tetramer of two alpha and two beta subunits. Mg(2+) serves as cofactor.

The protein resides in the cytoplasm. It carries out the reaction tRNA(Phe) + L-phenylalanine + ATP = L-phenylalanyl-tRNA(Phe) + AMP + diphosphate + H(+). This chain is Phenylalanine--tRNA ligase alpha subunit, found in Prochlorococcus marinus subsp. pastoris (strain CCMP1986 / NIES-2087 / MED4).